Reading from the N-terminus, the 266-residue chain is Protein crossbronx-like (266 aa).

Residues 15 to 178 enclose the UBC core domain; the sequence is KQGYKILAEY…IQELAISSRR (164 aa). The segment at 216 to 266 is disordered; it reads EATCEDDSPPAELLGHIDSSRQLDEDEANQRGKLQAATTDLQHGARCSVAQ.

The protein belongs to the ubiquitin-conjugating enzyme family. FTS subfamily.

This is Protein crossbronx-like from Drosophila ananassae (Fruit fly).